Here is a 252-residue protein sequence, read N- to C-terminus: GPI alpha-1,4-mannosyltransferase I, stabilizing subunit (252 aa).

The first 22 residues, 1-22, serve as a signal peptide directing secretion; the sequence is MAASALAWLLLWAAGLVGRLAA. 2 N-linked (GlcNAc...) asparagine glycosylation sites follow: N97 and N209. The helical transmembrane segment at 225–245 threads the bilayer; sequence VCSVTLLITVLCSTLILLAVF.

It belongs to the PIGX family. In terms of assembly, part of the glycosylphosphatidylinositol-mannosyltransferase I complex that is composed of PIGM and PIGX. Interacts with PIGM; PIGX stabilizes PIGM.

It is found in the endoplasmic reticulum membrane. The protein operates within glycolipid biosynthesis; glycosylphosphatidylinositol-anchor biosynthesis. Its function is as follows. Stabilizing subunit of the glycosylphosphatidylinositol-mannosyltransferase I complex which catalyzes the transfer of the first mannose, via an alpha-1,4 bond from a dolichol-phosphate-mannose (Dol-P-Man) to the glucosaminyl acyl phosphatidylinositol (GlcN-(acyl)PI) intermediate to generate alpha-D-Man-(1-&gt;4)-alpha-D-GlcN-(1-&gt;6)-(1-radyl,2-acyl-sn-glycero-3-phospho)-2-acyl-inositol and participates in the sixth step of the glycosylphosphatidylinositol-anchor biosynthesis. Probably acts by stabilizing the mannosyltransferase PIGM. The chain is GPI alpha-1,4-mannosyltransferase I, stabilizing subunit from Rattus norvegicus (Rat).